The chain runs to 109 residues: Mannose-specific lectin (109 aa).

Positions 1–109 (DNILYSSEVL…PPIWATGTGR (109 aa)) constitute a Bulb-type lectin domain. A disulfide bond links cysteine 29 and cysteine 52. The propeptide occupies 79–82 (TGTN).

In terms of assembly, homotrimer or homotetramer.

It localises to the secreted. Mannose-specific lectin. Shows agglutinating activity toward rabbit erythrocytes and mitogenic activity towards mouse lymphocytes. In Aloe arborescens (Kidachi aloe), this protein is Mannose-specific lectin.